We begin with the raw amino-acid sequence, 483 residues long: Phloretin 2'-O-glucosyltransferase (483 aa).

The active-site Proton acceptor is the His15. Residue His15 participates in an anthocyanidin binding. Asp118 acts as the Charge relay in catalysis. Thr140, Ala360, Gln362, His377, Trp380, Asn381, Ser382, and Glu385 together coordinate UDP-alpha-D-glucose. An an anthocyanidin-binding site is contributed by Ala400. Residues Glu401 and Gln402 each coordinate UDP-alpha-D-glucose.

This sequence belongs to the UDP-glycosyltransferase family. In terms of tissue distribution, highly expressed in roots and at lower levels in leaves, flowers and fruits.

The enzyme catalyses phloretin + UDP-alpha-D-glucose = phlorizin + UDP + H(+). Its function is as follows. Glycosyltransferase that possesses phloretin 2'-O-glycosyltransferase activity. Converts phloretin to phlorizin (phloretin 2'-O-glucoside), a potent antioxidant. Is specific for phloretin and does not possess glycosyltransferase activity toward caffeic acid, catechin, chlorogenic acid, 2-coumaric acid, 3-coumaric acid, 4-coumaric acid, cyanidin, 3,4-dihydroxyhydrocinnamic acid, epicatechin, 3-hydroxybenzoic acid, naringenin, 3,4-dihydroxybenzoic acid, quercetin and rutin. Can glycosylate phloretin in the presence of UDP-glucose, UDP-xylose and UDP-galactose. The chain is Phloretin 2'-O-glucosyltransferase from Malus domestica (Apple).